Reading from the N-terminus, the 425-residue chain is UDP-N-acetyl-D-glucosamine 6-dehydrogenase (425 aa).

NAD(+) contacts are provided by Val-17, Asp-35, Arg-40, Thr-86, and Thr-121. Catalysis depends on Cys-261, which acts as the Nucleophile. NAD(+) is bound at residue Arg-332.

The protein belongs to the UDP-glucose/GDP-mannose dehydrogenase family. Homotrimer.

It catalyses the reaction UDP-N-acetyl-alpha-D-glucosamine + 2 NAD(+) + H2O = UDP-2-acetamido-2-deoxy-alpha-D-glucuronate + 2 NADH + 3 H(+). The protein operates within capsule biogenesis; capsule polysaccharide biosynthesis. Its pathway is glycan metabolism; Vi-antigen biosynthesis. Dehydrogenase required for the biosynthesis of the capsular polysaccharide, commonly referred as the Vi antigen, an important virulence factor. Catalyzes the conversion of UDP-N-acetylglucosamine (UDP-GlcNAc) to UDP-N-acetylglucosaminuronic acid (UDP-GlcNAcA). Cannot use UDP-GalNAc, UDP-Glc and UDP-Gal as substrates. This chain is UDP-N-acetyl-D-glucosamine 6-dehydrogenase, found in Salmonella typhi.